The following is a 275-amino-acid chain: Tryptophan synthase alpha chain (275 aa).

Active-site proton acceptor residues include E49 and D60.

Belongs to the TrpA family. In terms of assembly, tetramer of two alpha and two beta chains.

It catalyses the reaction (1S,2R)-1-C-(indol-3-yl)glycerol 3-phosphate + L-serine = D-glyceraldehyde 3-phosphate + L-tryptophan + H2O. It participates in amino-acid biosynthesis; L-tryptophan biosynthesis; L-tryptophan from chorismate: step 5/5. In terms of biological role, the alpha subunit is responsible for the aldol cleavage of indoleglycerol phosphate to indole and glyceraldehyde 3-phosphate. This Nitrosomonas europaea (strain ATCC 19718 / CIP 103999 / KCTC 2705 / NBRC 14298) protein is Tryptophan synthase alpha chain.